Here is a 371-residue protein sequence, read N- to C-terminus: Cytochrome b (371 aa).

4 helical membrane passes run 25-45 (FGSM…FLAI), 69-90 (WMMQ…YIHI), 105-125 (WMSG…GYVL), and 170-190 (FFAL…LHII). Histidine 75 and histidine 89 together coordinate heme b. Residues histidine 174 and histidine 188 each contribute to the heme b site. Histidine 193 provides a ligand contact to a ubiquinone. Helical transmembrane passes span 218-238 (HKDL…VSFL), 280-300 (LGGA…PFTH), 312-332 (LSQL…WAAT), and 339-358 (FIII…LSTP).

The protein belongs to the cytochrome b family. The cytochrome bc1 complex contains 3 respiratory subunits (MT-CYB, CYC1 and UQCRFS1), 2 core proteins (UQCRC1 and UQCRC2) and probably 6 low-molecular weight proteins. The cofactor is heme b.

It is found in the mitochondrion inner membrane. Functionally, component of the ubiquinol-cytochrome c reductase complex (complex III or cytochrome b-c1 complex) that is part of the mitochondrial respiratory chain. The b-c1 complex mediates electron transfer from ubiquinol to cytochrome c. Contributes to the generation of a proton gradient across the mitochondrial membrane that is then used for ATP synthesis. The polypeptide is Cytochrome b (MT-CYB) (Antaresia maculosa (Eastern small blotched python)).